The chain runs to 282 residues: Putative phosphatase MPN_383 (282 aa).

Residue Asp-11 is the Nucleophile of the active site. Asp-11 serves as a coordination point for Mg(2+). Phosphate is bound at residue Leu-12. Asp-13 provides a ligand contact to Mg(2+). Phosphate contacts are provided by residues 45 to 46 (TG) and Lys-207. Residue Asp-230 participates in Mg(2+) binding. Asn-233 is a phosphate binding site.

The protein belongs to the HAD-like hydrolase superfamily. Cof family. Mg(2+) serves as cofactor.

In Mycoplasma pneumoniae (strain ATCC 29342 / M129 / Subtype 1) (Mycoplasmoides pneumoniae), this protein is Putative phosphatase MPN_383.